We begin with the raw amino-acid sequence, 297 residues long: N-acetylneuraminate lyase (297 aa).

Aceneuramate contacts are provided by serine 47 and threonine 48. The active-site Proton donor is the tyrosine 137. Lysine 165 functions as the Schiff-base intermediate with substrate in the catalytic mechanism. Residues threonine 167, glycine 189, aspartate 191, glutamate 192, and serine 208 each contribute to the aceneuramate site.

Belongs to the DapA family. NanA subfamily. As to quaternary structure, homotetramer.

Its subcellular location is the cytoplasm. The catalysed reaction is aceneuramate = aldehydo-N-acetyl-D-mannosamine + pyruvate. Its pathway is amino-sugar metabolism; N-acetylneuraminate degradation; D-fructose 6-phosphate from N-acetylneuraminate: step 1/5. Catalyzes the reversible aldol cleavage of N-acetylneuraminic acid (sialic acid; Neu5Ac) to form pyruvate and N-acetylmannosamine (ManNAc) via a Schiff base intermediate. This chain is N-acetylneuraminate lyase, found in Citrobacter koseri (strain ATCC BAA-895 / CDC 4225-83 / SGSC4696).